Reading from the N-terminus, the 236-residue chain is Small ribosomal subunit protein uS2c (236 aa).

The protein belongs to the universal ribosomal protein uS2 family.

Its subcellular location is the plastid. It localises to the chloroplast. The polypeptide is Small ribosomal subunit protein uS2c (rps2) (Crucihimalaya wallichii (Rock-cress)).